A 103-amino-acid polypeptide reads, in one-letter code: NAD(P)H-quinone oxidoreductase subunit 4L, organellar chromatophore (103 aa).

3 helical membrane-spanning segments follow: residues 3–23 (IMLE…VWGL), 32–52 (VLMS…AFSN), and 63–83 (VFAI…LAIL).

The protein belongs to the complex I subunit 4L family. As to quaternary structure, NDH is composed of at least 16 different subunits, 5 of which are encoded in the nucleus.

The protein resides in the plastid. It localises to the organellar chromatophore thylakoid membrane. The catalysed reaction is a plastoquinone + NADH + (n+1) H(+)(in) = a plastoquinol + NAD(+) + n H(+)(out). It carries out the reaction a plastoquinone + NADPH + (n+1) H(+)(in) = a plastoquinol + NADP(+) + n H(+)(out). In terms of biological role, NDH shuttles electrons from NAD(P)H:plastoquinone, via FMN and iron-sulfur (Fe-S) centers, to quinones in the photosynthetic chain and possibly in a chloroplast respiratory chain. The immediate electron acceptor for the enzyme in this species is believed to be plastoquinone. Couples the redox reaction to proton translocation, and thus conserves the redox energy in a proton gradient. The protein is NAD(P)H-quinone oxidoreductase subunit 4L, organellar chromatophore of Paulinella chromatophora.